The chain runs to 319 residues: Acetyl esterase (319 aa).

An Involved in the stabilization of the negatively charged intermediate by the formation of the oxyanion hole motif is present at residues 91–93 (HGG). Catalysis depends on residues serine 165, aspartate 262, and histidine 292.

This sequence belongs to the 'GDXG' lipolytic enzyme family. Homodimer. Interacts with MalT and MelA.

Its subcellular location is the cytoplasm. Functionally, displays esterase activity towards short chain fatty esters (acyl chain length of up to 8 carbons). Able to hydrolyze triacetylglycerol (triacetin) and tributyrylglycerol (tributyrin), but not trioleylglycerol (triolein) or cholesterol oleate. Negatively regulates MalT activity by antagonizing maltotriose binding. Inhibits MelA galactosidase activity. This is Acetyl esterase from Escherichia coli (strain 55989 / EAEC).